The following is a 406-amino-acid chain: Phosphoglycerate kinase (406 aa).

Residues 22-24, Arg37, 60-63, Arg119, and Arg152 contribute to the substrate site; these read DLN and HLGN. ATP-binding positions include Lys202, Glu325, and 355–358; that span reads GGDT.

This sequence belongs to the phosphoglycerate kinase family. In terms of assembly, monomer.

It localises to the cytoplasm. It carries out the reaction (2R)-3-phosphoglycerate + ATP = (2R)-3-phospho-glyceroyl phosphate + ADP. It functions in the pathway carbohydrate degradation; glycolysis; pyruvate from D-glyceraldehyde 3-phosphate: step 2/5. The sequence is that of Phosphoglycerate kinase from Orientia tsutsugamushi (strain Ikeda) (Rickettsia tsutsugamushi).